The chain runs to 117 residues: Large ribosomal subunit protein uL18 (117 aa).

It belongs to the universal ribosomal protein uL18 family. In terms of assembly, part of the 50S ribosomal subunit; part of the 5S rRNA/L5/L18/L25 subcomplex. Contacts the 5S and 23S rRNAs.

Functionally, this is one of the proteins that bind and probably mediate the attachment of the 5S RNA into the large ribosomal subunit, where it forms part of the central protuberance. In Francisella tularensis subsp. tularensis (strain FSC 198), this protein is Large ribosomal subunit protein uL18.